The chain runs to 63 residues: Beta-toxin NaTx36 (63 aa).

The LCN-type CS-alpha/beta domain occupies 1–62 (KDGYPMRSDG…VYDSATSKCR (62 aa)). 4 disulfide bridges follow: Cys-11–Cys-61, Cys-15–Cys-36, Cys-22–Cys-43, and Cys-26–Cys-45.

The protein belongs to the long (4 C-C) scorpion toxin superfamily. Sodium channel inhibitor family. Beta subfamily. In terms of tissue distribution, expressed by the venom gland.

Its subcellular location is the secreted. Functionally, beta toxins bind sodium channels (Nav) and shift the voltage of activation towards more negative potentials thereby affecting sodium channel activation and promoting spontaneous and repetitive firing. Only when tested on grasshopper mouse channels, this toxin inhibits Nav1.8/SCN10A sodium currents in a concentration and voltage-dependent manner (IC(50)=680 nM). This toxin hyperpolarizes the voltage dependence of Nav1.8/SCN10A activation, as well as steady-state fast inactivation and slow inactivation. In contrast to most beta scorpion toxins, this toxin inhibits grasshopper mouse Nav1.8/SCN10A currents through modulation of the domain I S4 voltage sensor, and the domain II second S5-S6 extracellular pore loop. The chain is Beta-toxin NaTx36 from Centruroides sculpturatus (Arizona bark scorpion).